The following is a 397-amino-acid chain: Mannitol-1-phosphate 5-dehydrogenase (397 aa).

9-20 contributes to the NAD(+) binding site; sequence AVHFGAGNIGRG. Residue Lys220 is part of the active site.

Belongs to the mannitol dehydrogenase family. Monomer.

It catalyses the reaction D-mannitol 1-phosphate + NAD(+) = beta-D-fructose 6-phosphate + NADH + H(+). In terms of biological role, catalyzes the NAD(H)-dependent interconversion of D-fructose 6-phosphate and D-mannitol 1-phosphate in the mannitol metabolic pathway. The protein is Mannitol-1-phosphate 5-dehydrogenase of Podospora anserina (strain S / ATCC MYA-4624 / DSM 980 / FGSC 10383) (Pleurage anserina).